Here is a 189-residue protein sequence, read N- to C-terminus: GTPase NRas (189 aa).

GTP contacts are provided by residues 10–18 (GAGGVGKSA) and 29–30 (VD). Residues 32–40 (YDPTIEDSY) carry the Effector region motif. 57–61 (DTAGQ) contributes to the GTP binding site. S89 carries the phosphoserine modification. 116-119 (NKCD) serves as a coordination point for GTP. A hypervariable region region spans residues 166-185 (YRMKKLNSSEDGTQGCMGLP). Residue K170 forms a Glycyl lysine isopeptide (Lys-Gly) (interchain with G-Cter in ubiquitin) linkage. C181 carries S-palmitoyl cysteine lipidation. Residue C186 is the site of S-farnesyl cysteine attachment. Residues 187-189 (VVM) constitute a propeptide, removed in mature form.

Belongs to the small GTPase superfamily. Ras family. As to quaternary structure, interacts (active GTP-bound form preferentially) with RGS14. Interacts (active GTP-bound form) with RASSF7. Interacts (active GTP-bound form) with both SHOC2 and PP1c (all isoforms) to form a tertiary complex; SHOC2 and PP1c preferably bind M-Ras/MRAS, but they also bind K-Ras/KRAS, N-Ras/NRAS and H-Ras/HRAS. Palmitoylated by the ZDHHC9-GOLGA7 complex. Depalmitoylated by ABHD17A, ABHD17B and ABHD17C. A continuous cycle of de- and re-palmitoylation regulates rapid exchange between plasma membrane and Golgi. Post-translationally, acetylation at Lys-104 prevents interaction with guanine nucleotide exchange factors (GEFs). In terms of processing, ubiquitinated by the BCR(LZTR1) E3 ubiquitin ligase complex at Lys-170 in a non-degradative manner, leading to inhibit Ras signaling by decreasing Ras association with membranes. Phosphorylation at Ser-89 enhances NRAS association with its downstream effectors.

It is found in the cell membrane. The protein resides in the golgi apparatus membrane. It carries out the reaction GTP + H2O = GDP + phosphate + H(+). With respect to regulation, alternates between an inactive form bound to GDP and an active form bound to GTP. Activated by a guanine nucleotide-exchange factor (GEF) and inactivated by a GTPase-activating protein (GAP). Functionally, ras proteins bind GDP/GTP and possess intrinsic GTPase activity. In Rattus norvegicus (Rat), this protein is GTPase NRas (Nras).